A 180-amino-acid chain; its full sequence is Fanconi anemia core complex-associated protein 20 (180 aa).

The span at 1-17 (MEAARRPRLGLSRRRPR) shows a compositional bias: basic residues. 2 disordered regions span residues 1–28 (MEAA…GRPW) and 106–135 (GAGG…VEQQ). Phosphoserine occurs at positions 113 and 137. The UBZ2-type zinc finger occupies 144–180 (LRSCPMCQKEFAPRLTQLDVDSHLAQCLAESTEDVTW). 4 residues coordinate Zn(2+): Cys-147, Cys-150, His-166, and Cys-170.

In terms of assembly, component of the Fanconi anemia (FA) complex. Interacts with FANCA; interaction is direct. Interacts with REV1. Reported to bind monoubiquitinated REV1; however it binds better to non-ubiquitinated REV1.

The protein localises to the nucleus. The protein resides in the chromosome. Functionally, component of the Fanconi anemia (FA) complex required to recruit the FA complex to DNA interstrand cross-links (ICLs) and promote ICLs repair. Following DNA damage recognizes and binds 'Lys-63'-linked ubiquitin generated by RNF8 at ICLs and recruits other components of the FA complex. Promotes translesion synthesis via interaction with REV1. The chain is Fanconi anemia core complex-associated protein 20 from Homo sapiens (Human).